A 173-amino-acid chain; its full sequence is uncharacterized protein (173 aa).

This is an uncharacterized protein from Saccharomyces cerevisiae (strain ATCC 204508 / S288c) (Baker's yeast).